The chain runs to 261 residues: Ribonuclease HII (261 aa).

Residues 1-20 show a composition bias toward basic and acidic residues; it reads MIRDKSAKRPAKDAPKKAAV. The interval 1 to 23 is disordered; sequence MIRDKSAKRPAKDAPKKAAVKEA. Residues 42–230 enclose the RNase H type-2 domain; it reads WPVAGCDEAG…VAAARAKHMP (189 aa). A divalent metal cation-binding residues include Asp48, Glu49, and Asp139.

This sequence belongs to the RNase HII family. Mn(2+) serves as cofactor. The cofactor is Mg(2+).

It localises to the cytoplasm. It carries out the reaction Endonucleolytic cleavage to 5'-phosphomonoester.. Functionally, endonuclease that specifically degrades the RNA of RNA-DNA hybrids. The protein is Ribonuclease HII of Bradyrhizobium diazoefficiens (strain JCM 10833 / BCRC 13528 / IAM 13628 / NBRC 14792 / USDA 110).